We begin with the raw amino-acid sequence, 1372 residues long: Collagen alpha-2(I) chain (1372 aa).

A signal peptide spans 1-22; sequence MLSFVDTRTLLLLAVTSCLATC. Q23 carries the post-translational modification Pyrrolidone carboxylic acid. A propeptide spans 23 to 85 (N-terminal propeptide); it reads QSLQMGSVRK…PPGLTGNFAA (63 aa). The disordered stretch occupies residues 28–1135; sequence GSVRKGPTGD…DQPRSQPSLR (1108 aa). The span at 59–77 shows a compositional bias: pro residues; sequence VGPPGPPGAPGPPGPPGPP. Residue Q86 is modified to Pyrrolidone carboxylic acid. K90 carries the post-translational modification Allysine. Positions 95–146 are enriched in low complexity; that stretch reads GPGPMGLMGPRGPPGAVGAPGPQGFQGPAGEPGEPGQTGPAGSRGPAGPPGK. Over residues 147–161 the composition is skewed to basic and acidic residues; the sequence is AGEDGHPGKPGRPGE. K183 carries the post-translational modification 5-hydroxylysine; alternate. A glycan (O-linked (Gal...) hydroxylysine; alternate) is linked at K183. 7 stretches are compositionally biased toward low complexity: residues 231-260, 285-299, 306-327, 336-348, 390-416, 476-495, and 519-537; these read VGAP…SAGP, AGPR…LSGP, PGAN…AGAP, PGPV…TGPR, PGEP…LPGA, LPGI…RGEA, and PGLA…NGAQ. The segment covering 544–553 has biased composition (gly residues); sequence GVQGGKGEQG. A compositionally biased stretch (low complexity) spans 600 to 639; the sequence is PGESGAAGPSGPIGIRGPSGAPGPDGNKGEAGAVGAPGSA. Over residues 640 to 649 the composition is skewed to gly residues; the sequence is GASGPGGLPG. Composition is skewed to low complexity over residues 674 to 716 and 725 to 743; these read NPGR…PRGS and PAGP…QPGA. The segment covering 744–753 has biased composition (basic and acidic residues); the sequence is KGEKGTKGPK. Residues 755–771 show a composition bias toward low complexity; the sequence is ENGIVGPTGPVGAAGPS. A compositionally biased stretch (gly residues) spans 781–790; the sequence is GSRGDGGPPG. Positions 783-785 match the Cell attachment site motif; the sequence is RGD. Residues 792–801 show a composition bias toward low complexity; that stretch reads TGFPGAAGRT. The short motif at 828-830 is the Cell attachment site element; sequence RGD. 4 stretches are compositionally biased toward low complexity: residues 855–882, 891–927, 957–978, and 987–1007; these read SGEP…LGLP, PGIA…NGAP, PGNI…VGPA, and PGPA…PSGP. A Cell attachment site motif is present at residues 1011 to 1013; it reads RGD. Basic and acidic residues predominate over residues 1011 to 1022; it reads RGDKGEPGDKGA. The span at 1095–1107 shows a compositional bias: pro residues; the sequence is AGPPGPPGPPGPP. Residues 1108–1120 are compositionally biased toward gly residues; the sequence is GVSGGGYDFGFEG. A propeptide spans 1126–1372 (C-terminal propeptide); it reads DQPRSQPSLR…RVEVGPVCFK (247 aa). Positions 1139–1372 constitute a Fibrillar collagen NC1 domain; sequence YEVDATLKSL…RVEVGPVCFK (234 aa). Cystine bridges form between C1169–C1201, C1209–C1370, and C1278–C1323. D1187, N1189, Q1190, C1192, and D1195 together coordinate Ca(2+). N1273 carries an N-linked (GlcNAc...) asparagine glycan.

The protein belongs to the fibrillar collagen family. In terms of assembly, trimers of one alpha 2(I) and two alpha 1(I) chains. Interacts (via C-terminus) with TMEM131 (via PapD-L domain); the interaction is direct and is involved in assembly and TRAPPIII ER-to-Golgi transport complex-dependent secretion of collagen. In terms of processing, proline residues at the third position of the tripeptide repeating unit (G-X-P) are hydroxylated in some or all of the chains. Proline residues at the second position of the tripeptide repeating unit (G-P-X) are hydroxylated in some of the chains. Forms the fibrils of tendon, ligaments and bones. In bones the fibrils are mineralized with calcium hydroxyapatite. Expressed in flagella of epididymal sperm.

It localises to the secreted. The protein resides in the extracellular space. It is found in the extracellular matrix. In terms of biological role, type I collagen is a member of group I collagen (fibrillar forming collagen). This chain is Collagen alpha-2(I) chain (Col1a2), found in Rattus norvegicus (Rat).